The sequence spans 293 residues: Bifunctional protein FolD (293 aa).

NADP(+) is bound by residues 164–166 (GRS), Ser193, and Thr234.

It belongs to the tetrahydrofolate dehydrogenase/cyclohydrolase family. Homodimer.

The enzyme catalyses (6R)-5,10-methylene-5,6,7,8-tetrahydrofolate + NADP(+) = (6R)-5,10-methenyltetrahydrofolate + NADPH. The catalysed reaction is (6R)-5,10-methenyltetrahydrofolate + H2O = (6R)-10-formyltetrahydrofolate + H(+). The protein operates within one-carbon metabolism; tetrahydrofolate interconversion. Its function is as follows. Catalyzes the oxidation of 5,10-methylenetetrahydrofolate to 5,10-methenyltetrahydrofolate and then the hydrolysis of 5,10-methenyltetrahydrofolate to 10-formyltetrahydrofolate. The polypeptide is Bifunctional protein FolD (Bacteroides thetaiotaomicron (strain ATCC 29148 / DSM 2079 / JCM 5827 / CCUG 10774 / NCTC 10582 / VPI-5482 / E50)).